A 389-amino-acid polypeptide reads, in one-letter code: UDP-D-apiose/UDP-D-xylose synthase 2 (389 aa).

Residues F28, I29, D49, N76, I77, and L96 each coordinate NAD(+). UDP-alpha-D-glucuronate is bound by residues Y105, T139, E141, R182, and Y185. NAD(+) is bound by residues Y185 and K189. Y185 acts as the Proton acceptor in catalysis. N214 provides a ligand contact to UDP-alpha-D-glucuronate. NAD(+) contacts are provided by W215 and R235. K251, V253, R260, Y331, Y335, D337, and R341 together coordinate UDP-alpha-D-glucuronate.

This sequence belongs to the NAD(P)-dependent epimerase/dehydratase family. As to quaternary structure, homodimer and heterodimer with AXS1. Requires NAD(+) as cofactor. In terms of tissue distribution, widely expressed with stronger expression in dark-grown seedlings, leaves and stems, and lower levels in flowers, siliques, pistils, pollen and roots.

Its subcellular location is the cytoplasm. The enzyme catalyses UDP-alpha-D-glucuronate + H(+) = UDP-alpha-D-xylose + CO2. It carries out the reaction UDP-alpha-D-glucuronate + H(+) = UDP-alpha-D-apiose + CO2. Its function is as follows. Together with AXS1, catalyzes the conversion of UDP-D-glucuronate into a mixture of UDP-D-apiose (UDP-Api) as the main product and UDP-D-xylose to a lesser extent, via a cycle of oxidation and reduction. D-Apiose (3-C-hydroxymethyl-d-erythrose) is the only plant cell wall monosaccharide with a branched carbon skeleton and is found in rhamnogalacturonan II (RG-II), apiogalacturonan, and several apioglycosides. The polypeptide is UDP-D-apiose/UDP-D-xylose synthase 2 (Arabidopsis thaliana (Mouse-ear cress)).